The following is a 377-amino-acid chain: uncharacterized protein (377 aa).

An N-terminal signal peptide occupies residues 1-23 (MLKFRNFFKLTLLTLASAFFLSG). Residue Cys-24 is the site of N-palmitoyl cysteine attachment. Cys-24 is lipidated: S-diacylglycerol cysteine.

It is found in the cell membrane. This is an uncharacterized protein from Mycoplasma genitalium (strain ATCC 33530 / DSM 19775 / NCTC 10195 / G37) (Mycoplasmoides genitalium).